We begin with the raw amino-acid sequence, 413 residues long: Peptide chain release factor 1, mitochondrial (413 aa).

The transit peptide at 1 to 40 (MRVLIRPNFLSNLIRYCSRGTHSHDRSLRSVLSSNMIRLY) directs the protein to the mitochondrion. At glutamine 287 the chain carries N5-methylglutamine.

The protein belongs to the prokaryotic/mitochondrial release factor family. In terms of processing, methylation increases the termination efficiency of RF1. In terms of tissue distribution, mostly expressed in seedlings, stems and adult plants, and, to a lower extent, in siliques. Barely detected in etiolated seedlings and roots.

Its subcellular location is the mitochondrion. In terms of biological role, peptide chain release factor 1 directs the termination of translation in response to the peptide chain termination codons UAG and UAA in mitochondria. The sequence is that of Peptide chain release factor 1, mitochondrial from Arabidopsis thaliana (Mouse-ear cress).